The sequence spans 163 residues: NADH-quinone oxidoreductase subunit I 1 (163 aa).

4Fe-4S ferredoxin-type domains lie at 53–83 (LRRY…IEAG) and 94–123 (VRYD…EGPN). Cys63, Cys66, Cys69, Cys73, Cys103, Cys106, Cys109, and Cys113 together coordinate [4Fe-4S] cluster.

This sequence belongs to the complex I 23 kDa subunit family. As to quaternary structure, NDH-1 is composed of 14 different subunits. Subunits NuoA, H, J, K, L, M, N constitute the membrane sector of the complex. It depends on [4Fe-4S] cluster as a cofactor.

The protein resides in the cell inner membrane. The catalysed reaction is a quinone + NADH + 5 H(+)(in) = a quinol + NAD(+) + 4 H(+)(out). Its function is as follows. NDH-1 shuttles electrons from NADH, via FMN and iron-sulfur (Fe-S) centers, to quinones in the respiratory chain. The immediate electron acceptor for the enzyme in this species is believed to be ubiquinone. Couples the redox reaction to proton translocation (for every two electrons transferred, four hydrogen ions are translocated across the cytoplasmic membrane), and thus conserves the redox energy in a proton gradient. In Rhizobium etli (strain ATCC 51251 / DSM 11541 / JCM 21823 / NBRC 15573 / CFN 42), this protein is NADH-quinone oxidoreductase subunit I 1.